Here is a 473-residue protein sequence, read N- to C-terminus: GTPase Der (473 aa).

EngA-type G domains follow at residues 3-167 (FTVA…GEDR) and 203-378 (LRVA…KVWN). GTP-binding positions include 9 to 16 (GRPNVGKS), 56 to 60 (DTAGL), 119 to 122 (NKSE), 209 to 216 (GRPNAGKS), 256 to 260 (DTAGM), and 321 to 324 (NKWD). The 85-residue stretch at 379-463 (KRISTARLNR…PIRIHFRSPD (85 aa)) folds into the KH-like domain.

It belongs to the TRAFAC class TrmE-Era-EngA-EngB-Septin-like GTPase superfamily. EngA (Der) GTPase family. Associates with the 50S ribosomal subunit.

Its function is as follows. GTPase that plays an essential role in the late steps of ribosome biogenesis. This Rhizobium johnstonii (strain DSM 114642 / LMG 32736 / 3841) (Rhizobium leguminosarum bv. viciae) protein is GTPase Der.